Consider the following 661-residue polypeptide: uncharacterized protein (661 aa).

The next 7 membrane-spanning stretches (helical) occupy residues 37–57 (VFLG…LFLS), 87–107 (INSP…AVFI), 120–140 (WLLL…NVIL), 158–178 (VFWQ…PIIV), 243–263 (LLDI…LYTI), 266–286 (TLMW…IAIG), and 341–361 (FNLL…YNYF). Residues 123–410 (LGVLLSLLFV…VTNQIQNITE (288 aa)) form the ABC transmembrane type-1 domain. In terms of domain architecture, ABC transporter spans 453-659 (VALENVTLSP…AEGRWQISPI (207 aa)). 487-494 (GPSGSGKS) serves as a coordination point for ATP.

Belongs to the ABC transporter superfamily.

The protein localises to the cell inner membrane. This is an uncharacterized protein from Synechocystis sp. (strain ATCC 27184 / PCC 6803 / Kazusa).